Here is a 152-residue protein sequence, read N- to C-terminus: uncharacterized protein (152 aa).

The 127-residue stretch at 7–133 folds into the VOC domain; the sequence is PALSPHLVVD…FGHHWSLGQP (127 aa).

This is an uncharacterized protein from Mycobacterium bovis (strain ATCC BAA-935 / AF2122/97).